The sequence spans 435 residues: MSVTRHYDREFVRTFFTSPTAVDGEEDSAKMLRSAGQLRGLQAPDVWVPDNEDATAPNMRAEGVENIIDVVANQGAEFPGEIHPRVVWHRESPATRYKGFQQMLEITDPENGAVEHIDGFVIPEVGDIDDWKKADEFFTIIEHEHGLEEGSLSMSVIVESGEAELAMGDLREEMGKPSNNLERMFLLVDGEVDYTKDMRAMTPTGELPPWPELRHNTSRGASAAGLIAVDGPYDDIRDVEGYRERMKDNRAKGMTGIWSLTPGQVVEANTAPLPPKTGSWLLEAGGQEVELEAQDGKQVYDGDDLSLEEVSDGGYVLQAGGDRLELDEDELTEELLDRTAYIPSMTDIVDSMEEFEAAKEAGKGAIAMTQAATLVINGVEVDISKDRMWDEATYQAAQTPITLFQDVYEHRPDQHEELAEMYGADIVERATAVGN.

2 residues coordinate Mg(2+): Glu-159 and Asn-180. Glu-159 lines the substrate pocket.

This sequence belongs to the HpcH/HpaI aldolase family. Mg(2+) is required as a cofactor. Mn(2+) serves as cofactor. Requires Co(2+) as cofactor. It depends on Ca(2+) as a cofactor.

It carries out the reaction (S)-malyl-CoA = glyoxylate + acetyl-CoA. The catalysed reaction is (S)-malyl-CoA + H2O = (S)-malate + CoA + H(+). Its function is as follows. Involved in the methylaspartate cycle. Catalyzes the biosynthesis of malate in two steps. In the first reaction acetyl-CoA is condensed reversibly with glyoxylate to form (S)-malyl-CoA. In the second reaction (S)-malyl-CoA is hydrolyzed to malate and CoA. It can also catalyze the condensation of propionyl-CoA with glyoxylate and of acetyl-CoA with pyruvate, however the CoA-ester hydrolysis reaction is highly specific for (S)-malyl-CoA. The chain is Apparent malate synthase (aceB) from Haloarcula marismortui (strain ATCC 43049 / DSM 3752 / JCM 8966 / VKM B-1809) (Halobacterium marismortui).